A 199-amino-acid chain; its full sequence is N-(5'-phosphoribosyl)anthranilate isomerase (199 aa).

The protein belongs to the TrpF family.

The catalysed reaction is N-(5-phospho-beta-D-ribosyl)anthranilate = 1-(2-carboxyphenylamino)-1-deoxy-D-ribulose 5-phosphate. It functions in the pathway amino-acid biosynthesis; L-tryptophan biosynthesis; L-tryptophan from chorismate: step 3/5. The protein is N-(5'-phosphoribosyl)anthranilate isomerase of Lacticaseibacillus casei (strain BL23) (Lactobacillus casei).